A 363-amino-acid polypeptide reads, in one-letter code: Ribosomal RNA large subunit methyltransferase M (363 aa).

Residues S194, 227 to 230, D246, D266, and D284 contribute to the S-adenosyl-L-methionine site; that span reads CPGG. Catalysis depends on K313, which acts as the Proton acceptor.

The protein belongs to the class I-like SAM-binding methyltransferase superfamily. RNA methyltransferase RlmE family. RlmM subfamily. In terms of assembly, monomer.

Its subcellular location is the cytoplasm. The enzyme catalyses cytidine(2498) in 23S rRNA + S-adenosyl-L-methionine = 2'-O-methylcytidine(2498) in 23S rRNA + S-adenosyl-L-homocysteine + H(+). Catalyzes the 2'-O-methylation at nucleotide C2498 in 23S rRNA. This Haemophilus influenzae (strain 86-028NP) protein is Ribosomal RNA large subunit methyltransferase M.